A 492-amino-acid polypeptide reads, in one-letter code: Ketol-acid reductoisomerase (NADP(+)) (492 aa).

The KARI N-terminal Rossmann domain occupies Ala15 to Ser208. NADP(+) contacts are provided by residues Cys45–Gln48, Arg68, Arg76, Ser78, and Asp108–Gln110. His132 is a catalytic residue. An NADP(+)-binding site is contributed by Gly158. 2 KARI C-terminal knotted domains span residues Ser209 to Gln344 and Phe345 to Met485. 4 residues coordinate Mg(2+): Asp217, Glu221, Glu389, and Glu393. Ser414 lines the substrate pocket.

It belongs to the ketol-acid reductoisomerase family. Requires Mg(2+) as cofactor.

The enzyme catalyses (2R)-2,3-dihydroxy-3-methylbutanoate + NADP(+) = (2S)-2-acetolactate + NADPH + H(+). It carries out the reaction (2R,3R)-2,3-dihydroxy-3-methylpentanoate + NADP(+) = (S)-2-ethyl-2-hydroxy-3-oxobutanoate + NADPH + H(+). The protein operates within amino-acid biosynthesis; L-isoleucine biosynthesis; L-isoleucine from 2-oxobutanoate: step 2/4. Its pathway is amino-acid biosynthesis; L-valine biosynthesis; L-valine from pyruvate: step 2/4. In terms of biological role, involved in the biosynthesis of branched-chain amino acids (BCAA). Catalyzes an alkyl-migration followed by a ketol-acid reduction of (S)-2-acetolactate (S2AL) to yield (R)-2,3-dihydroxy-isovalerate. In the isomerase reaction, S2AL is rearranged via a Mg-dependent methyl migration to produce 3-hydroxy-3-methyl-2-ketobutyrate (HMKB). In the reductase reaction, this 2-ketoacid undergoes a metal-dependent reduction by NADPH to yield (R)-2,3-dihydroxy-isovalerate. The chain is Ketol-acid reductoisomerase (NADP(+)) from Yersinia enterocolitica serotype O:8 / biotype 1B (strain NCTC 13174 / 8081).